The following is a 619-amino-acid chain: ESX-2 secretion system protein EccA2 (619 aa).

373 to 380 (GPPGTGKT) contacts ATP.

It belongs to the CbxX/CfxQ family. In terms of assembly, part of the ESX-2 / type VII secretion system (T7SS), which is composed of cytosolic and membrane components.

Its subcellular location is the cytoplasm. Part of an ESX-2 / type VII specialized secretion system (T7SS), which exports several proteins. May have ATPase activity and might provide energy for the export of ESX-2 substrates. The chain is ESX-2 secretion system protein EccA2 from Mycobacterium bovis (strain ATCC BAA-935 / AF2122/97).